A 546-amino-acid chain; its full sequence is Probable protein kinase UbiB (546 aa).

One can recognise a Protein kinase domain in the interval 124 to 502 (DFEIKPLASA…HVRQGQSRYF (379 aa)). ATP is bound by residues 130-138 (LASASIAQV) and lysine 153. The active-site Proton acceptor is the aspartate 288. The next 2 helical transmembrane spans lie at 501–521 (YFLGIGATLVLSGTFLLVSRP) and 522–542 (EWGLMPVWLMAGGLIAWFVGW).

It belongs to the ABC1 family. UbiB subfamily.

It is found in the cell inner membrane. Its pathway is cofactor biosynthesis; ubiquinone biosynthesis [regulation]. Functionally, is probably a protein kinase regulator of UbiI activity which is involved in aerobic coenzyme Q (ubiquinone) biosynthesis. The chain is Probable protein kinase UbiB from Escherichia coli (strain SMS-3-5 / SECEC).